We begin with the raw amino-acid sequence, 70 residues long: DNA gyrase inhibitor YacG (70 aa).

Positions 20, 23, 35, and 39 each coordinate Zn(2+).

The protein belongs to the DNA gyrase inhibitor YacG family. In terms of assembly, interacts with GyrB. It depends on Zn(2+) as a cofactor.

Its function is as follows. Inhibits all the catalytic activities of DNA gyrase by preventing its interaction with DNA. Acts by binding directly to the C-terminal domain of GyrB, which probably disrupts DNA binding by the gyrase. The chain is DNA gyrase inhibitor YacG from Rhizobium etli (strain CIAT 652).